A 130-amino-acid chain; its full sequence is Small ribosomal subunit protein uS8 (130 aa).

It belongs to the universal ribosomal protein uS8 family. As to quaternary structure, part of the 30S ribosomal subunit. Contacts proteins S5 and S12.

In terms of biological role, one of the primary rRNA binding proteins, it binds directly to 16S rRNA central domain where it helps coordinate assembly of the platform of the 30S subunit. This chain is Small ribosomal subunit protein uS8, found in Cellvibrio japonicus (strain Ueda107) (Pseudomonas fluorescens subsp. cellulosa).